The sequence spans 201 residues: MPQAVAGPEIERLIQLLARMPGLGPRSARRAALQLIKKREALLAPLAEAMRVACERIVVCHECGNVDTSDPCTICRDHSRDPSILVVVEDVSDLWALERSGAVTARYHVLGGVLSALDGIRPENLNLSRLVERASVPEMREVILALNATVDGQTTAHYITELLAHLPVKVTKLAHGVPVGGELDYLDEGTLSAAIRQRTAF.

A C4-type zinc finger spans residues Cys60–Cys75. The Toprim domain maps to Ser83–Pro178.

Belongs to the RecR family.

In terms of biological role, may play a role in DNA repair. It seems to be involved in an RecBC-independent recombinational process of DNA repair. It may act with RecF and RecO. The chain is Recombination protein RecR from Methylobacterium nodulans (strain LMG 21967 / CNCM I-2342 / ORS 2060).